A 220-amino-acid chain; its full sequence is MKKIQIAIDGPASSGKSTVAKIIARNLGLIYLDTGAMYRVATLVALQEKTEDASKIIQFIENHPISFANGKNGQEVLVGLDNVTEVIRTNEVTNAVSKISAMVEIREFMVAEQQRIAQKGGIIMDGRDIGTVVLPQANLKIFLVASVDERAERRYKENLSKGIPTDLERLKVEIAERDRKDSIRVVSPLKQAEDAILLDSTGKTIKEIVQFIEEKAKKLM.

10-18 (GPASSGKST) lines the ATP pocket.

Belongs to the cytidylate kinase family. Type 1 subfamily.

It is found in the cytoplasm. It catalyses the reaction CMP + ATP = CDP + ADP. The enzyme catalyses dCMP + ATP = dCDP + ADP. The sequence is that of Cytidylate kinase from Lactococcus lactis subsp. cremoris (strain SK11).